Here is a 134-residue protein sequence, read N- to C-terminus: DNA-binding protein H-NS homolog (134 aa).

The tract at residues 106–134 is disordered; sequence HKTWTGQGRTPRPIQNALNKGKSLSDFEI. Residues 112 to 117 mediate DNA binding; sequence QGRTPR.

Belongs to the histone-like protein H-NS family. In terms of assembly, homodimer that oligomerizes on DNA into higher-order complexes that form bridges between disparate regions of DNA compacting it.

The protein localises to the cytoplasm. The protein resides in the nucleoid. Its function is as follows. A DNA-binding protein implicated in transcriptional repression and chromosome organization and compaction. Binds nucleation sites in AT-rich DNA and bridges them, forming higher-order nucleoprotein complexes and condensing the chromosome. As many horizontally transferred genes are AT-rich, it plays a central role in silencing foreign genes. A subset of genes are repressed by H-NS in association with other proteins. The chain is DNA-binding protein H-NS homolog (hns) from Haemophilus influenzae (strain ATCC 51907 / DSM 11121 / KW20 / Rd).